Reading from the N-terminus, the 214-residue chain is Ribosomal RNA small subunit methyltransferase G (214 aa).

S-adenosyl-L-methionine contacts are provided by residues Gly-81, Met-86, 132–133, and Arg-147; that span reads VE.

Belongs to the methyltransferase superfamily. RNA methyltransferase RsmG family.

The protein resides in the cytoplasm. It carries out the reaction guanosine(527) in 16S rRNA + S-adenosyl-L-methionine = N(7)-methylguanosine(527) in 16S rRNA + S-adenosyl-L-homocysteine. Functionally, specifically methylates the N7 position of guanine in position 527 of 16S rRNA. This chain is Ribosomal RNA small subunit methyltransferase G, found in Ectopseudomonas mendocina (strain ymp) (Pseudomonas mendocina).